The following is a 546-amino-acid chain: Membrane protein insertase YidC (546 aa).

The helical transmembrane segment at 8-28 (ILLATVLSVGILILWQVIFPT) threads the bilayer. The tract at residues 31-70 (APPKPAHPPAAEVAKPAAPASPAPGAAAPAVPAPPPDAPE) is disordered. The span at 39 to 60 (PAAEVAKPAAPASPAPGAAAPA) shows a compositional bias: low complexity. A run of 5 helical transmembrane segments spans residues 326–346 (IDYGAVAKFFALFARGLLYVM), 356–376 (WGVAIILLTVLVRLVLFPLTY), 422–442 (LGGCLPMLLQMPVWFALYAAL), 459–479 (LTAHDPYFILPIAMGISSFVM), and 498–518 (FFPGFFTVIMLFVPGGLTLYI).

It belongs to the OXA1/ALB3/YidC family. Type 1 subfamily. In terms of assembly, interacts with the Sec translocase complex via SecD. Specifically interacts with transmembrane segments of nascent integral membrane proteins during membrane integration.

Its subcellular location is the cell inner membrane. Functionally, required for the insertion and/or proper folding and/or complex formation of integral membrane proteins into the membrane. Involved in integration of membrane proteins that insert both dependently and independently of the Sec translocase complex, as well as at least some lipoproteins. Aids folding of multispanning membrane proteins. This Anaeromyxobacter dehalogenans (strain 2CP-1 / ATCC BAA-258) protein is Membrane protein insertase YidC.